Consider the following 483-residue polypeptide: E3 ubiquitin-protein ligase TRIM50 (483 aa).

The RING-type zinc-finger motif lies at 16-57 (CPICLEVFKEPLMLQCGHSYCKDCLDNLSQHLDSELCCPVCR). Residues 84–125 (IEPTVCVHHRNPLSLFCEKDQEFICGLCGLLGSHQHHRVTPV) form a B box-type zinc finger. Zn(2+) contacts are provided by C89, H92, C111, and H117. Coiled-coil stretches lie at residues 127-169 (TVYS…NESD) and 203-236 (GLVASLDMQLEQAQGTQERLAQAEQVLEQFGNES). Residues 275 to 474 (DIKLTVWKRL…LPMVLPPPSG (200 aa)) enclose the B30.2/SPRY domain. At K372 the chain carries N6-acetyllysine.

The protein belongs to the TRIM/RBCC family. As to quaternary structure, can form dimers and trimers. Interacts with several E2 ubiquitin-conjugating enzymes, including UBE2L6, UBE2E1, UBE2E3. No interaction with UBE2H. Interacts with BECN1. Interacts with SQSTM1. Interacts with NLRP3. Auto-ubiquitinated. In terms of processing, acetylated by EP300 and KAT2B. HDAC6 drives TRIM50 deacetylation. Acetylation antagonizes with TRIM50 ubiquitination. Expressed in the stomach.

The protein localises to the cytoplasm. It carries out the reaction S-ubiquitinyl-[E2 ubiquitin-conjugating enzyme]-L-cysteine + [acceptor protein]-L-lysine = [E2 ubiquitin-conjugating enzyme]-L-cysteine + N(6)-ubiquitinyl-[acceptor protein]-L-lysine.. Its function is as follows. E3 ubiquitin-protein ligase that ubiquitinates Beclin-1/BECN1 in a 'Lys-63'-dependent manner enhancing its binding to ULK1. In turn, promotes starvation-induced autophagy activation. Also interacts with p62/SQSTM1 protein and thereby induces the formation and the autophagy clearance of aggresome-associated polyubiquitinated proteins through HDAC6 interaction. Also promotes NLRP3 inflammasome activation by directly inducing NLRP3 oligomerization independent of its E3 ligase function. The polypeptide is E3 ubiquitin-protein ligase TRIM50 (Trim50) (Mus musculus (Mouse)).